The sequence spans 1710 residues: Extracellular matrix protein A (1710 aa).

Residues 1 to 22 (MKISIFILLLFISSMVIISVNA) form the signal peptide. Cys-rich CT repeat units lie at residues 43–70 (NRWSTDMCSAGLLFGKYCTHTQICCDDE), 71–94 (NACTIDSCSKTSGCVHTPINVDDK), 95–117 (NPCTIDSCIKGFISHTQISCDDK), 118–141 (NACTIDSCDCSSGCQNKPMSCDDN), 142–165 (NPCTVDSCNNSTGCRNTPISVDDN), 166–189 (NPCTIDSCSKSTGVVHIPINVDDL), 190–213 (NPCTIDACTKEGGVTHTPVNVDDN), 214–237 (NKCTTDSCSLFTGITHTEICCDDN), 238–261 (NACTDDSCSPSTGCVNTPISCDDK), 262–285 (NPCTVDSCNNSTGCCYTPINVDDN), 286–309 (NPCTIDACTKSTGVTHTPINVDDN), 310–333 (NQCTTDSCTKEGGVTHTPVNTDDN), 334–357 (NPCTVDSCSPFTGVSHTPINVDDN), 358–381 (NKCTIDACTKEGGVTHTPVNTDDN), 382–405 (NACTLDSCSPLTGVTHTPINCDDK), 406–429 (KACTVDSCSNSTGCVNTPISCDDN), 430–453 (NPCTVDTCDDSTGCCNTPINVDDN), 454–477 (NPCTVDACTKSTGVTHTPVNVDDN), 478–501 (NKCTIDACTKEGGVTHTPVNTDDN), 502–525 (NACTLDNCSPLTGVTHTPINCDDK), 526–549 (KACTVDSCSNSTGCVNTPISCDDN), 550–573 (NPCTVDSCDDITGCCNTPINVDDN), 574–597 (NPCTVDACTKSTGVTHTPVNVDDN), 598–621 (NKCTIDACTKEGGVTHTPVNTDDN), 622–645 (NACTLDSCSPSTGVSHTPINCDDS), 646–669 (NPCTVDSCSNSTGCVNTPVNVDDN), 670–693 (NPCTVDACTKSTGVTHTPVNVDDN), 694–717 (NKCTIDACTKEGGVTHTPVNTDDN), 718–741 (NACTIDSCSPSTGISHTPINCDDK), 742–765 (KACTVDSCSNSTGCVNTPISCDDN), 766–789 (NPCTVDSCDDLTGCCNTPINVDDN), 790–813 (NPCTIDACTKSTGVTHTPVNVDDN), 814–837 (NKCTIDTCTKEGGVTHTPVNTDDN), 838–861 (NACTLDSCSPSTGVSHTPINCDDN), 862–885 (NKCTVDSCSNSTGCVNTPINCDDS), 886–909 (NPCTVDSCNNSTGCVNTPVNVDDN), 910–933 (NPCTVDACTKSTGVTHTPVNVDDN), 934–957 (NKCTIDACTKEGGVTHTPVNTDDN), 958–981 (NACTIDACTKEGGVTHTPVNTDDN), 982–1005 (NACTLDSCSPSTGVSHTPINCDDS), 1006–1029 (NPCTVDSCSNSTGCCNTPINVDDN), 1030–1053 (NPCTVDSCTKPTGVTHTPVNVDDN), 1054–1077 (NKCTIDACTKEGGVTHTPVNTDDN), 1078–1101 (NACTLDSCSPSTGISHAPINCDDS), 1102–1125 (NPCTIDSCNNSTGCCNTPINVDDN), 1126–1149 (NPCTVDSCTKSGGVTHTPVNVDDN), 1150–1173 (NKCTTDACTKEGGVTHTPISCDDN), 1174–1197 (NACTIDSCSNSTGCVNTPISCDDR), 1198–1221 (NPCTVDTCTKEKGCQHSPIDTDDS), 1222–1245 (NKCTIDACSSTTGVTHTSINCDDN), 1246–1269 (NACTFDSCSNSTGCVSTPISCDDK), 1270–1293 (NPCTLDSCDKKTGCCNTPINVDDN), 1294–1317 (DKCTTDSCTKEGGVTHTPISCDDN), 1318–1341 (NACTTDSCSKSTGCVNKPISCDDS), 1342–1365 (NPCTVDSCSNSTGCCNTPINVDDN), 1366–1389 (NPCTTDSCTKSGGVTHTPVNVDDN), 1390–1413 (NKCTTDSCTKEGGITHTPISCDDN), 1414–1437 (NPCTLDSCSPTTGCVNKPMNVDDN), 1438–1461 (DACTTDTCNKDGTITHTPINTDDN), 1462–1485 (NKCTLDACSPKTGVTHTPINCDDG), 1486–1509 (NKCTINSCSPSVGCISTPVSCPKP), 1511–1534 (DKCSISQCDSAKGCIEVPMNCTSD), 1558–1581 (NKCQVAKCDLIKGCTVSNVVCDDG), 1582–1606 (NACTEDSCCSDTGKCQFEPIKLPKN), 1608–1632 (NKCIISKCDPIKGTITNSTVNCECD), and 1658–1682 (NPKTADSCDSKTGKCINKPYNVITS). Residues N150 and N151 are each glycosylated (N-linked (GlcNAc...) asparagine). N-linked (GlcNAc...) asparagine glycans are attached at residues N270 and N271. Residue N415 is glycosylated (N-linked (GlcNAc...) asparagine). The N-linked (GlcNAc...) asparagine glycan is linked to N535. N655 carries N-linked (GlcNAc...) asparagine glycosylation. The N-linked (GlcNAc...) asparagine glycan is linked to N751. N-linked (GlcNAc...) asparagine glycans are attached at residues N871, N894, and N895. A glycan (N-linked (GlcNAc...) asparagine) is linked at N1015. 2 N-linked (GlcNAc...) asparagine glycosylation sites follow: N1110 and N1111. N-linked (GlcNAc...) asparagine glycosylation occurs at N1183. N-linked (GlcNAc...) asparagine glycosylation occurs at N1255. N1351 is a glycosylation site (N-linked (GlcNAc...) asparagine). N-linked (GlcNAc...) asparagine glycosylation occurs at N1530. N1624 is a glycosylation site (N-linked (GlcNAc...) asparagine).

It localises to the secreted. The polypeptide is Extracellular matrix protein A (ecmA) (Dictyostelium discoideum (Social amoeba)).